The sequence spans 211 residues: Ribosomal RNA small subunit methyltransferase G (211 aa).

S-adenosyl-L-methionine is bound by residues glycine 73, 125-126 (IE), and arginine 141.

Belongs to the methyltransferase superfamily. RNA methyltransferase RsmG family.

It is found in the cytoplasm. It catalyses the reaction guanosine(527) in 16S rRNA + S-adenosyl-L-methionine = N(7)-methylguanosine(527) in 16S rRNA + S-adenosyl-L-homocysteine. Its function is as follows. Specifically methylates the N7 position of guanine in position 527 of 16S rRNA. This Methylobacterium radiotolerans (strain ATCC 27329 / DSM 1819 / JCM 2831 / NBRC 15690 / NCIMB 10815 / 0-1) protein is Ribosomal RNA small subunit methyltransferase G.